The sequence spans 399 residues: CCA-adding enzyme (399 aa).

Positions 32 and 35 each coordinate ATP. 2 residues coordinate CTP: Gly32 and Arg35. Residues Asp45 and Asp47 each coordinate Mg(2+). Arg116, Asp159, Arg162, Arg165, and Arg168 together coordinate ATP. Residues Arg116, Asp159, Arg162, Arg165, and Arg168 each contribute to the CTP site.

Belongs to the tRNA nucleotidyltransferase/poly(A) polymerase family. Bacterial CCA-adding enzyme type 3 subfamily. As to quaternary structure, homodimer. Mg(2+) serves as cofactor.

The enzyme catalyses a tRNA precursor + 2 CTP + ATP = a tRNA with a 3' CCA end + 3 diphosphate. The catalysed reaction is a tRNA with a 3' CCA end + 2 CTP + ATP = a tRNA with a 3' CCACCA end + 3 diphosphate. In terms of biological role, catalyzes the addition and repair of the essential 3'-terminal CCA sequence in tRNAs without using a nucleic acid template. Adds these three nucleotides in the order of C, C, and A to the tRNA nucleotide-73, using CTP and ATP as substrates and producing inorganic pyrophosphate. tRNA 3'-terminal CCA addition is required both for tRNA processing and repair. Also involved in tRNA surveillance by mediating tandem CCA addition to generate a CCACCA at the 3' terminus of unstable tRNAs. While stable tRNAs receive only 3'-terminal CCA, unstable tRNAs are marked with CCACCA and rapidly degraded. This is CCA-adding enzyme from Streptococcus gordonii (strain Challis / ATCC 35105 / BCRC 15272 / CH1 / DL1 / V288).